The following is a 97-amino-acid chain: Putative ankyrin repeat protein RBE_0357 (97 aa).

Residues 24–54 form an ANK repeat; sequence YGKTALHYAYTKRNIDIIKILLKCPGIKICI.

This is Putative ankyrin repeat protein RBE_0357 from Rickettsia bellii (strain RML369-C).